The following is a 206-amino-acid chain: Shieldin complex subunit 1 (206 aa).

Composition is skewed to polar residues over residues 1–15 (MATQETTPGSQTEES), 33–43 (RPSQQTNSEAF), and 60–69 (DSSNLNTEQN). Disordered stretches follow at residues 1 to 21 (MATQETTPGSQTEESNALDLP) and 33 to 69 (RPSQQTNSEAFSSEEACSIPCSSDVDPDSSNLNTEQN).

As to quaternary structure, component of the shieldin complex, consisting of SHLD1, SHLD2, SHLD3 and MAD2L2/REV7. Within the complex, SHLD2 forms a scaffold which interacts with a SHLD3-MAD2L2 subcomplex via its N-terminus, and with SHLD1 via its C-terminus. Interacts with ASTE1.

Its subcellular location is the chromosome. Its function is as follows. Component of the shieldin complex, which plays an important role in repair of DNA double-stranded breaks (DSBs). During G1 and S phase of the cell cycle, the complex functions downstream of TP53BP1 to promote non-homologous end joining (NHEJ) and suppress DNA end resection. Mediates various NHEJ-dependent processes including immunoglobulin class-switch recombination, and fusion of unprotected telomeres. This Bos taurus (Bovine) protein is Shieldin complex subunit 1.